We begin with the raw amino-acid sequence, 269 residues long: Bidirectional sugar transporter SWEET1a (269 aa).

The Extracellular segment spans residues 1-6 (MEHIAR). The helical transmembrane segment at 7-27 (FFFGVSGNVIALFLFLSPVVT) threads the bilayer. Positions 8–96 (FFGVSGNVIA…IFLIFAVDRR (89 aa)) constitute a MtN3/slv 1 domain. The Cytoplasmic portion of the chain corresponds to 28–42 (FWRIIRKRSTEDFSG). The chain crosses the membrane as a helical span at residues 43 to 63 (VPYNMTLLNCLLSAWYGLPFV). Topologically, residues 64-72 (SPNNILVST) are extracellular. The chain crosses the membrane as a helical span at residues 73 to 93 (INGTGSVIEAIYVVIFLIFAV). At 94 to 100 (DRRARLR) the chain is on the cytoplasmic side. The helical transmembrane segment at 101–121 (MLGLLSIVVSIFATVVLVSLL) threads the bilayer. Residues 122–129 (ALHGNARK) are Extracellular-facing. A helical transmembrane segment spans residues 130–150 (VFCGLAATIFSICMYASPLSI). The region spanning 132–215 (CGLAATIFSI…ILYFIYRKNK (84 aa)) is the MtN3/slv 2 domain. Over 151–164 (MRLVIKTKSVEYMP) the chain is Cytoplasmic. Residues 165–185 (FLLSLAVFLCGTSWFIYGLLG) form a helical membrane-spanning segment. The Extracellular portion of the chain corresponds to 186–189 (RDPF). A helical transmembrane segment spans residues 190-210 (IIIPNGCGSFLGLVQLILYFI). Residues 211–269 (YRKNKGPAVPAGKGEAAAAADVEDAKKVAAAVEMADATTTNKAAADTVVGDGKVVASQV) lie on the Cytoplasmic side of the membrane.

It belongs to the SWEET sugar transporter family. In terms of assembly, forms homooligomers and/or heterooligomers.

It localises to the cell membrane. In terms of biological role, mediates both low-affinity uptake and efflux of sugar across the plasma membrane. The sequence is that of Bidirectional sugar transporter SWEET1a from Sorghum bicolor (Sorghum).